The following is a 345-amino-acid chain: Dihydroorotase (345 aa).

Zn(2+) is bound by residues His14 and His16. Substrate-binding positions include 16 to 18 and Asn42; that span reads HLR. Positions 102, 139, and 177 each coordinate Zn(2+). At Lys102 the chain carries N6-carboxylysine. Residue His139 participates in substrate binding. Leu222 serves as a coordination point for substrate. Asp250 is a binding site for Zn(2+). Asp250 is a catalytic residue. 2 residues coordinate substrate: His254 and Ala266.

Belongs to the metallo-dependent hydrolases superfamily. DHOase family. Class II DHOase subfamily. As to quaternary structure, homodimer. Requires Zn(2+) as cofactor.

It catalyses the reaction (S)-dihydroorotate + H2O = N-carbamoyl-L-aspartate + H(+). It participates in pyrimidine metabolism; UMP biosynthesis via de novo pathway; (S)-dihydroorotate from bicarbonate: step 3/3. In terms of biological role, catalyzes the reversible cyclization of carbamoyl aspartate to dihydroorotate. The protein is Dihydroorotase of Nitrosomonas eutropha (strain DSM 101675 / C91 / Nm57).